A 154-amino-acid chain; its full sequence is Crossover junction endodeoxyribonuclease RuvC (154 aa).

Active-site residues include Asp7, Glu67, and Asp139. 3 residues coordinate Mg(2+): Asp7, Glu67, and Asp139.

The protein belongs to the RuvC family. In terms of assembly, homodimer which binds Holliday junction (HJ) DNA. The HJ becomes 2-fold symmetrical on binding to RuvC with unstacked arms; it has a different conformation from HJ DNA in complex with RuvA. In the full resolvosome a probable DNA-RuvA(4)-RuvB(12)-RuvC(2) complex forms which resolves the HJ. It depends on Mg(2+) as a cofactor.

The protein resides in the cytoplasm. The enzyme catalyses Endonucleolytic cleavage at a junction such as a reciprocal single-stranded crossover between two homologous DNA duplexes (Holliday junction).. Functionally, the RuvA-RuvB-RuvC complex processes Holliday junction (HJ) DNA during genetic recombination and DNA repair. Endonuclease that resolves HJ intermediates. Cleaves cruciform DNA by making single-stranded nicks across the HJ at symmetrical positions within the homologous arms, yielding a 5'-phosphate and a 3'-hydroxyl group; requires a central core of homology in the junction. The consensus cleavage sequence is 5'-(A/T)TT(C/G)-3'. Cleavage occurs on the 3'-side of the TT dinucleotide at the point of strand exchange. HJ branch migration catalyzed by RuvA-RuvB allows RuvC to scan DNA until it finds its consensus sequence, where it cleaves and resolves the cruciform DNA. This chain is Crossover junction endodeoxyribonuclease RuvC, found in Prochlorococcus marinus (strain NATL1A).